Reading from the N-terminus, the 647-residue chain is Threonine--tRNA ligase (647 aa).

The region spanning 1–63 (MYMIQLTFPD…EHDGKIELVM (63 aa)) is the TGS domain. A catalytic region spans residues 247-544 (DHRKLGKELD…LIEEYKGAFP (298 aa)). 3 residues coordinate Zn(2+): C340, H391, and H521.

This sequence belongs to the class-II aminoacyl-tRNA synthetase family. In terms of assembly, homodimer. Requires Zn(2+) as cofactor.

It is found in the cytoplasm. It catalyses the reaction tRNA(Thr) + L-threonine + ATP = L-threonyl-tRNA(Thr) + AMP + diphosphate + H(+). Catalyzes the attachment of threonine to tRNA(Thr) in a two-step reaction: L-threonine is first activated by ATP to form Thr-AMP and then transferred to the acceptor end of tRNA(Thr). Also edits incorrectly charged L-seryl-tRNA(Thr). The polypeptide is Threonine--tRNA ligase (Exiguobacterium sp. (strain ATCC BAA-1283 / AT1b)).